Here is a 217-residue protein sequence, read N- to C-terminus: Somatotropin (217 aa).

The N-terminal stretch at 1-27 (MMAAGPRTSLLLAFALLCLPWTQMVGA) is a signal peptide. A Zn(2+)-binding site is contributed by histidine 46. Cysteine 79 and cysteine 190 are joined by a disulfide. Residue serine 132 is modified to Phosphoserine. Glutamate 199 is a binding site for Zn(2+). Cysteines 207 and 215 form a disulfide.

Belongs to the somatotropin/prolactin family.

Its subcellular location is the secreted. Plays an important role in growth control. Its major role in stimulating body growth is to stimulate the liver and other tissues to secrete IGF1. It stimulates both the differentiation and proliferation of myoblasts. It also stimulates amino acid uptake and protein synthesis in muscle and other tissues. This Giraffa camelopardalis (Giraffe) protein is Somatotropin (GH1).